A 29-amino-acid chain; its full sequence is Dermaseptin-1 (29 aa).

Valine 29 carries the post-translational modification Valine amide.

As to expression, expressed by the skin glands.

Its subcellular location is the secreted. In terms of biological role, antimicrobial peptide, active against the Gram-positive bacterium S.aureus, the Gram-negative bacteria E.coli and P.aeruginosa, and the yeasts C.albicans and P.brasiliensis. Has hemolytic activity (40% hemolysis at 128 ug/ml). This chain is Dermaseptin-1, found in Phyllomedusa tarsius (Brownbelly leaf frog).